The following is a 1140-amino-acid chain: MKTHKKKKSLGGLFSHSSSSPNLKSFLTEEVIHEQQQQQQQHNNNNNNNNNHQRQPSTTSTSSYIDSASSSIEETSGYLSKTSSSSSLPSSPLHNQNQNQNGNIQLNSSSGSLNNNEQQQQQQSISQTSSPNTSSPIMGKKKPSRLAQAFKRVKNNGNNKLKKEIEELTNKTGLNQQYTHSNLPFNVVESDIDNGSSGGTTSSTGNIISHSKSPSSSSSSSSSKKHQRKSRFIEPISQSTEDYTDIPRIIKMSVEYLFEKCLLVPGIFRESANAMELQRLSQLFEKGGDIDLSEYTDPHCIGGLLKLYFREKPIPIFPYDLHKRIYSVLNEEDSNIKVKSLLESGLGKGQFLILRYLFELLNAVSINCNVNFMNYQNLAICFAPSLIQSFDLSCYDVIERLIENYHSIFGVVVPVVDNSSNVSSSSLAHPIIGGKSETNVSLNNLTVTILDHGDINNNSNSSNNNNSSSSSSPYKKSPKPSPKSSPKLNNRNSISPKLSSSTSFRKSINLSSNSIMISDEVQQEQQNQQQQQDEQQDEQQDEQQDEQQDEQNSNSTSINTSSSSITRPRKGSTVQYLNRINTCRRPSSWTNNNRIKQQQHHHHHHQQQQQHQQHQQQQSSSSESNSSLTSSPQKRLNSVNGLESYEEGKNVNEIYSSLKEESSKLPKKSSLNRQMTIVNSNNIGNGDEKNSDCTTSDEDEELKISKPIIRSTSVNEILKETNDDNNNNDQINNSNSSNNIPKTTITTTTNNTTTTNNISPIVKSKSQIITSSAKVTPTPTPAPMQTSSFLSTKQTNSPSSSSSPSSTVSSTSSSPSSSLSSSIDNKTMSNVNYNRFQPANRTVSSPNVRNFSVPTTTTTTSIGSNSFVSPRFIGKRTTPSIFSPRKQSICKPKNTTSSLSSSSSNISKSTNSTPTPTPAPILTSTLSVNSTSSSSKLQEKALPTKTTFITQTSSPLLLPQPLTSTSTSTSTSTSTSTSTSTSTSTTIPTPTPTTSSFKSNSFSTSNDNSNNNNNNNNNNNNNNNNNNNNNNNNNNVTSPTIVSSPSSPTSPISPTSSTFIKGHSHSNSLSQTPSSSSSSLGNRLTAPGRQLNHTNSTSSLISKFNQIDTPSGINQGWKGGVVVQKKQDPVKKSLAIFEKE.

Disordered stretches follow at residues 1–145 (MKTH…KPSR), 189–236 (ESDI…IEPI), 455–504 (INNN…STSF), 520–644 (EVQQ…GLES), 661–700 (ESSK…DEDE), 720–759 (ETND…NNIS), 773–927 (AKVT…STLS), and 952–1095 (TSSP…NHTN). Composition is skewed to low complexity over residues 10–26 (LGGL…LKSF) and 35–71 (QQQQ…ASSS). Positions 28–55 (TEEVIHEQQQQQQQHNNNNNNNNNHQRQ) form a coiled coil. Over residues 72-82 (IEETSGYLSKT) the composition is skewed to polar residues. Composition is skewed to low complexity over residues 83–136 (SSSS…TSSP) and 193–222 (DNGS…SSSS). The Rho-GAP domain maps to 234-409 (EPISQSTEDY…RLIENYHSIF (176 aa)). Composition is skewed to low complexity over residues 456-475 (NNNS…SPYK) and 482-493 (PKSSPKLNNRNS). Residues 494–504 (ISPKLSSSTSF) show a composition bias toward polar residues. The stretch at 517 to 548 (ISDEVQQEQQNQQQQQDEQQDEQQDEQQDEQQ) forms a coiled coil. Residues 520–533 (EVQQEQQNQQQQQD) are compositionally biased toward low complexity. Residues 534-549 (EQQDEQQDEQQDEQQD) are compositionally biased toward acidic residues. Over residues 550–566 (EQNSNSTSINTSSSSIT) the composition is skewed to low complexity. Residues 572–596 (STVQYLNRINTCRRPSSWTNNNRIK) show a composition bias toward polar residues. A compositionally biased stretch (basic residues) spans 597–606 (QQQHHHHHHQ). A compositionally biased stretch (low complexity) spans 607–631 (QQQQHQQHQQQQSSSSESNSSLTSS). Polar residues-rich tracts occupy residues 632 to 641 (PQKRLNSVNG) and 672 to 684 (NRQM…NNIG). The segment covering 724-759 (DNNNNDQINNSNSSNNIPKTTITTTTNNTTTTNNIS) has biased composition (low complexity). Residues 773–796 (AKVTPTPTPAPMQTSSFLSTKQTN) show a composition bias toward polar residues. The segment covering 797–822 (SPSSSSSPSSTVSSTSSSPSSSLSSS) has biased composition (low complexity). Polar residues predominate over residues 823–854 (IDNKTMSNVNYNRFQPANRTVSSPNVRNFSVP). 3 stretches are compositionally biased toward low complexity: residues 891-914 (KPKN…NSTP), 952-1058 (TSSP…TSST), and 1065-1079 (HSNS…SSSS).

It localises to the cytoplasm. Functionally, rho GTPase-activating protein involved in the signal transduction pathway. This Dictyostelium discoideum (Social amoeba) protein is Rho GTPase-activating protein gacF (gacF).